Here is a 318-residue protein sequence, read N- to C-terminus: NADH-ubiquinone oxidoreductase chain 1 (318 aa).

The next 8 membrane-spanning stretches (helical) occupy residues phenylalanine 2–leucine 22, threonine 76–isoleucine 96, leucine 102–alanine 122, leucine 146–isoleucine 166, tyrosine 171–alanine 191, alanine 217–leucine 237, glutamate 253–valine 273, and leucine 294–isoleucine 314.

It belongs to the complex I subunit 1 family. Core subunit of respiratory chain NADH dehydrogenase (Complex I) which is composed of 45 different subunits.

It is found in the mitochondrion inner membrane. The enzyme catalyses a ubiquinone + NADH + 5 H(+)(in) = a ubiquinol + NAD(+) + 4 H(+)(out). Its function is as follows. Core subunit of the mitochondrial membrane respiratory chain NADH dehydrogenase (Complex I) which catalyzes electron transfer from NADH through the respiratory chain, using ubiquinone as an electron acceptor. Essential for the catalytic activity and assembly of complex I. This is NADH-ubiquinone oxidoreductase chain 1 (MT-ND1) from Lemur catta (Ring-tailed lemur).